We begin with the raw amino-acid sequence, 316 residues long: Calumenin-B (316 aa).

Positions 1–19 are cleaved as a signal peptide; that stretch reads MELRPLVMCFALCVVYASS. EF-hand domains follow at residues 69 to 104, 105 to 140, 152 to 187, 189 to 224, 230 to 265, and 266 to 301; these read ESKE…SQKR, WIYD…YILD, QMIS…EEYD, MKDI…QEGD, WVRT…SDYD, and HAEA…FVGS. Aspartate 82, aspartate 84, aspartate 86, tyrosine 88, glutamate 93, aspartate 118, asparagine 120, aspartate 122, and glutamate 129 together coordinate Ca(2+). Asparagine 132 carries an N-linked (GlcNAc...) asparagine glycan. Ca(2+) is bound by residues aspartate 165, aspartate 167, aspartate 169, lysine 171, glutamate 176, aspartate 202, asparagine 204, aspartate 206, glutamate 213, aspartate 243, asparagine 245, aspartate 247, arginine 249, glutamate 254, aspartate 279, aspartate 281, aspartate 283, lysine 285, and glutamate 290. The Prevents secretion from ER motif lies at 313 to 316; that stretch reads HDEF.

It belongs to the CREC family. As to quaternary structure, interacts with ggcx.

Its subcellular location is the endoplasmic reticulum membrane. The protein localises to the golgi apparatus. The protein resides in the secreted. It is found in the melanosome. It localises to the sarcoplasmic reticulum lumen. Its function is as follows. Involved in regulation of vitamin K-dependent carboxylation of multiple N-terminal glutamate residues. Seems to inhibit gamma-carboxylase ggcx. Binds 7 calcium ions with a low affinity. The chain is Calumenin-B (calub) from Salmo salar (Atlantic salmon).